We begin with the raw amino-acid sequence, 244 residues long: 5-oxoprolinase subunit A (244 aa).

Belongs to the LamB/PxpA family. As to quaternary structure, forms a complex composed of PxpA, PxpB and PxpC.

The catalysed reaction is 5-oxo-L-proline + ATP + 2 H2O = L-glutamate + ADP + phosphate + H(+). Catalyzes the cleavage of 5-oxoproline to form L-glutamate coupled to the hydrolysis of ATP to ADP and inorganic phosphate. The sequence is that of 5-oxoprolinase subunit A from Salmonella paratyphi A (strain ATCC 9150 / SARB42).